We begin with the raw amino-acid sequence, 234 residues long: OVARIAN TUMOR DOMAIN-containing deubiquitinating enzyme 3 (234 aa).

In terms of domain architecture, OTU spans 76-234; that stretch reads YAVDRVKGDG…SGRNHYDLLR (159 aa). Residues 81–87 are cys-loop; the sequence is VKGDGRC. Asp84 is an active-site residue. Residue Cys87 is the Nucleophile of the active site. A variable-loop region spans residues 154-164; that stretch reads IGRHDFWGGES. The his-loop stretch occupies residues 224–229; sequence YSGRNH. His229 is an active-site residue.

This sequence belongs to the peptidase C85 family.

It catalyses the reaction Thiol-dependent hydrolysis of ester, thioester, amide, peptide and isopeptide bonds formed by the C-terminal Gly of ubiquitin (a 76-residue protein attached to proteins as an intracellular targeting signal).. Hydrolase that can remove conjugated ubiquitin from proteins in vitro and may therefore play an important regulatory role at the level of protein turnover by preventing degradation. Cysteine protease with a preference for 'Lys-63' over 'Lys-48' over 'Met-1' -linked ubiquitin (UB) tetramers (e.g. Ub3 and Ub4) as substrates. Also cleaves RUB-GST fusion. The polypeptide is OVARIAN TUMOR DOMAIN-containing deubiquitinating enzyme 3 (Arabidopsis thaliana (Mouse-ear cress)).